Reading from the N-terminus, the 146-residue chain is Basic phospholipase A2 beta-bungarotoxin A1 chain (146 aa).

The N-terminal stretch at 1 to 19 (MNPAHLLVLPAVCVSFLGA) is a signal peptide. Residues 20–27 (SIIPPQSL) constitute a propeptide that is removed on maturation. 6 disulfide bridges follow: Cys-54/Cys-145, Cys-56/Cys-72, Cys-71/Cys-126, Cys-78/Cys-119, Cys-87/Cys-112, and Cys-105/Cys-117. Ca(2+) is bound by residues Tyr-55, Gly-57, and Gly-59. The active site involves His-75. Asp-76 serves as a coordination point for Ca(2+). Asp-120 is a catalytic residue.

It belongs to the phospholipase A2 family. Group I subfamily. D49 sub-subfamily. Heterodimer with beta-bungarotoxin B chain; disulfide-linked. The A chain has phospholipase A2 activity and the B chain shows homology with the basic protease inhibitors. Ca(2+) serves as cofactor. Expressed by the venom gland.

It localises to the secreted. The enzyme catalyses a 1,2-diacyl-sn-glycero-3-phosphocholine + H2O = a 1-acyl-sn-glycero-3-phosphocholine + a fatty acid + H(+). Snake venom phospholipase A2 (PLA2) that inhibits neuromuscular transmission by blocking acetylcholine release from the nerve termini. PLA2 catalyzes the calcium-dependent hydrolysis of the 2-acyl groups in 3-sn-phosphoglycerides. In Bungarus flaviceps flaviceps (Red-headed krait), this protein is Basic phospholipase A2 beta-bungarotoxin A1 chain.